The following is a 240-amino-acid chain: Coiled-coil domain-containing protein 152 (240 aa).

A coiled-coil region spans residues Met55 to Asp223.

The protein is Coiled-coil domain-containing protein 152 (CCDC152) of Bos taurus (Bovine).